A 217-amino-acid chain; its full sequence is Adenylate kinase (217 aa).

10–15 serves as a coordination point for ATP; it reads GAGKGT. An NMP region spans residues 30-59; it reads STGDMLRAAVKAGTEMGLAAKKVMDAGGLV. AMP contacts are provided by residues Thr-31, Arg-36, 57–59, 85–88, and Gln-92; these read GLV and GFPR. Residues 122–159 form an LID region; it reads GRRSHPASGRTYHVKFNPPKVDGVDDVTGEPLVQRDDD. Residues Arg-123 and 132–133 contribute to the ATP site; that span reads TY. Residues Arg-156 and Arg-167 each coordinate AMP. An ATP-binding site is contributed by Gly-203.

Belongs to the adenylate kinase family. In terms of assembly, monomer.

It localises to the cytoplasm. The enzyme catalyses AMP + ATP = 2 ADP. It participates in purine metabolism; AMP biosynthesis via salvage pathway; AMP from ADP: step 1/1. Its function is as follows. Catalyzes the reversible transfer of the terminal phosphate group between ATP and AMP. Plays an important role in cellular energy homeostasis and in adenine nucleotide metabolism. This Leptothrix cholodnii (strain ATCC 51168 / LMG 8142 / SP-6) (Leptothrix discophora (strain SP-6)) protein is Adenylate kinase.